A 382-amino-acid chain; its full sequence is Lipid-A-disaccharide synthase (382 aa).

Belongs to the LpxB family.

The catalysed reaction is 2-N,3-O-bis[(3R)-3-hydroxytetradecanoyl]-alpha-D-glucosaminyl 1-phosphate + UDP-2-N,3-O-bis[(3R)-3-hydroxytetradecanoyl]-alpha-D-glucosamine = lipid A disaccharide (E. coli) + UDP + H(+). The enzyme catalyses a lipid X + a UDP-2-N,3-O-bis[(3R)-3-hydroxyacyl]-alpha-D-glucosamine = a lipid A disaccharide + UDP + H(+). Its pathway is glycolipid biosynthesis; lipid IV(A) biosynthesis; lipid IV(A) from (3R)-3-hydroxytetradecanoyl-[acyl-carrier-protein] and UDP-N-acetyl-alpha-D-glucosamine: step 5/6. In terms of biological role, condensation of UDP-2,3-diacylglucosamine and 2,3-diacylglucosamine-1-phosphate to form lipid A disaccharide, a precursor of lipid A, a phosphorylated glycolipid that anchors the lipopolysaccharide to the outer membrane of the cell. In Salmonella heidelberg (strain SL476), this protein is Lipid-A-disaccharide synthase.